A 119-amino-acid chain; its full sequence is Ribonuclease P protein component (119 aa).

It belongs to the RnpA family. As to quaternary structure, consists of a catalytic RNA component (M1 or rnpB) and a protein subunit.

It carries out the reaction Endonucleolytic cleavage of RNA, removing 5'-extranucleotides from tRNA precursor.. In terms of biological role, RNaseP catalyzes the removal of the 5'-leader sequence from pre-tRNA to produce the mature 5'-terminus. It can also cleave other RNA substrates such as 4.5S RNA. The protein component plays an auxiliary but essential role in vivo by binding to the 5'-leader sequence and broadening the substrate specificity of the ribozyme. This Streptococcus mutans serotype c (strain ATCC 700610 / UA159) protein is Ribonuclease P protein component.